The primary structure comprises 435 residues: 5-hydroxybenzimidazole synthase (435 aa).

Substrate contacts are provided by residues Met95, Tyr124, His163, 186 to 188, 227 to 230, and Glu266; these read SKG and NGLR. His270 lines the Zn(2+) pocket. Tyr293 lines the substrate pocket. Residue His334 coordinates Zn(2+). [4Fe-4S] cluster-binding residues include Cys410, Cys413, and Cys417.

This sequence belongs to the ThiC family. 5-hydroxybenzimidazole synthase subfamily. Homodimer. [4Fe-4S] cluster serves as cofactor.

It catalyses the reaction 5-amino-1-(5-phospho-beta-D-ribosyl)imidazole + AH2 + S-adenosyl-L-methionine = 5-hydroxybenzimidazole + 5'-deoxyadenosine + formate + L-methionine + A + NH4(+) + phosphate + 2 H(+). Functionally, catalyzes the conversion of aminoimidazole ribotide (AIR) to 5-hydroxybenzimidazole (5-HBI) in a radical S-adenosyl-L-methionine (SAM)-dependent reaction. Is thus involved in the anaerobic biosynthesis of the benzimidazole lower axial ligand of the cobamide produced by G.sulfurreducens. In Geobacter sulfurreducens (strain ATCC 51573 / DSM 12127 / PCA), this protein is 5-hydroxybenzimidazole synthase.